Here is a 541-residue protein sequence, read N- to C-terminus: Zingiberene synthase (541 aa).

5 residues coordinate Mg(2+): Asp-295, Asp-299, Asn-439, Ser-443, and Glu-447. Residues Asp-295–Asp-299 carry the DDXXD motif motif.

It belongs to the terpene synthase family. Requires Mg(2+) as cofactor. Mn(2+) is required as a cofactor.

It is found in the cytoplasm. It carries out the reaction (2E,6E)-farnesyl diphosphate = alpha-zingiberene + diphosphate. Its pathway is secondary metabolite biosynthesis; terpenoid biosynthesis. In terms of biological role, sesquiterpene synthase converting farnesyl diphosphate into two major products, zingiberene &gt; beta-sesquiphellandrene, and five minor products, 7-epi-sesquithujene, sesquisabinene A, (E)-alpha-bergamotene, (E)-beta-farnesene and beta-bisabolene. Can also accept geranyl diphosphate as substrate, producing nine monoterpenes, with myrcene, limonene and alpha-terpinolene as the major products. This is Zingiberene synthase (TPS1) from Sorghum bicolor (Sorghum).